The sequence spans 405 residues: Histone deacetylase clr6 (405 aa).

Residues 6 to 318 (KKVSYFYDED…WTYETGLLAG (313 aa)) are histone deacetylase. The active site involves histidine 138.

Belongs to the histone deacetylase family. HD type 1 subfamily. In terms of assembly, heterotetramer of alp13, clr6, prw1 and pst2.

It localises to the nucleus. The enzyme catalyses N(6)-acetyl-L-lysyl-[histone] + H2O = L-lysyl-[histone] + acetate. In terms of biological role, responsible for the deacetylation of lysine residues on the N-terminal part of the core histones (H2A, H2B, H3 and H4). Histone deacetylation gives a tag for epigenetic repression and plays an important role in transcriptional regulation, cell cycle progression and developmental events. Histone deacetylases act via the formation of large multiprotein complexes. Has a role in chromatin assembly and chromosome segregation. The protein is Histone deacetylase clr6 (clr6) of Schizosaccharomyces pombe (strain 972 / ATCC 24843) (Fission yeast).